Consider the following 448-residue polypeptide: ATP-dependent protease ATPase subunit HslU (448 aa).

ATP is bound by residues Ile-18, 60–65, Asp-261, Glu-326, and Arg-398; that span reads GVGKTE.

It belongs to the ClpX chaperone family. HslU subfamily. As to quaternary structure, a double ring-shaped homohexamer of HslV is capped on each side by a ring-shaped HslU homohexamer. The assembly of the HslU/HslV complex is dependent on binding of ATP.

Its subcellular location is the cytoplasm. Its function is as follows. ATPase subunit of a proteasome-like degradation complex; this subunit has chaperone activity. The binding of ATP and its subsequent hydrolysis by HslU are essential for unfolding of protein substrates subsequently hydrolyzed by HslV. HslU recognizes the N-terminal part of its protein substrates and unfolds these before they are guided to HslV for hydrolysis. In Paraburkholderia phytofirmans (strain DSM 17436 / LMG 22146 / PsJN) (Burkholderia phytofirmans), this protein is ATP-dependent protease ATPase subunit HslU.